Here is a 314-residue protein sequence, read N- to C-terminus: L-lactate dehydrogenase 2 (314 aa).

Residues Val16, Asp37, Lys42, Tyr68, and 82–83 (GL) contribute to the NAD(+) site. Residues Gln85, Arg91, and 123-126 (NPVD) each bind substrate. Residues 121 to 123 (ATN) and Ser146 each bind NAD(+). Residue 151–154 (DSAR) participates in substrate binding. Arg156 and His171 together coordinate beta-D-fructose 1,6-bisphosphate. His178 serves as the catalytic Proton acceptor. Tyr223 is subject to Phosphotyrosine. Thr232 is a substrate binding site.

This sequence belongs to the LDH/MDH superfamily. LDH family. Homotetramer.

It localises to the cytoplasm. It carries out the reaction (S)-lactate + NAD(+) = pyruvate + NADH + H(+). It participates in fermentation; pyruvate fermentation to lactate; (S)-lactate from pyruvate: step 1/1. With respect to regulation, allosterically activated by fructose 1,6-bisphosphate (FBP). In terms of biological role, catalyzes the conversion of lactate to pyruvate. The polypeptide is L-lactate dehydrogenase 2 (Bacillus cereus (strain ATCC 14579 / DSM 31 / CCUG 7414 / JCM 2152 / NBRC 15305 / NCIMB 9373 / NCTC 2599 / NRRL B-3711)).